The following is a 275-amino-acid chain: Diaminopimelate epimerase (275 aa).

Residues N20 and N63 each coordinate substrate. C72 (proton donor) is an active-site residue. Residues 73–74 (GN), N179, and 197–198 (ER) each bind substrate. Residue C207 is the Proton acceptor of the active site. 208 to 209 (GT) serves as a coordination point for substrate.

The protein belongs to the diaminopimelate epimerase family. In terms of assembly, homodimer.

The protein localises to the cytoplasm. It catalyses the reaction (2S,6S)-2,6-diaminopimelate = meso-2,6-diaminopimelate. It participates in amino-acid biosynthesis; L-lysine biosynthesis via DAP pathway; DL-2,6-diaminopimelate from LL-2,6-diaminopimelate: step 1/1. Functionally, catalyzes the stereoinversion of LL-2,6-diaminopimelate (L,L-DAP) to meso-diaminopimelate (meso-DAP), a precursor of L-lysine and an essential component of the bacterial peptidoglycan. The sequence is that of Diaminopimelate epimerase from Chlamydia trachomatis serovar A (strain ATCC VR-571B / DSM 19440 / HAR-13).